The following is a 302-amino-acid chain: Orotidine 5'-phosphate decarboxylase (302 aa).

Catalysis depends on Lys105, which acts as the Proton donor.

It belongs to the OMP decarboxylase family. Type 2 subfamily.

It catalyses the reaction orotidine 5'-phosphate + H(+) = UMP + CO2. Its pathway is pyrimidine metabolism; UMP biosynthesis via de novo pathway; UMP from orotate: step 2/2. This is Orotidine 5'-phosphate decarboxylase from Rhodopirellula baltica (strain DSM 10527 / NCIMB 13988 / SH1).